Reading from the N-terminus, the 391-residue chain is S-adenosylmethionine synthase (391 aa).

Residue H14 participates in ATP binding. D16 lines the Mg(2+) pocket. E42 is a binding site for K(+). Residues E55 and Q98 each contribute to the L-methionine site. The tract at residues 98-108 (QSADIAMGVDE) is flexible loop. ATP is bound by residues 172-174 (DGK), 238-239 (RF), D247, 253-254 (RK), A270, and K274. D247 serves as a coordination point for L-methionine. K278 contributes to the L-methionine binding site.

It belongs to the AdoMet synthase family. In terms of assembly, homotetramer; dimer of dimers. Requires Mg(2+) as cofactor. The cofactor is K(+).

The protein localises to the cytoplasm. It carries out the reaction L-methionine + ATP + H2O = S-adenosyl-L-methionine + phosphate + diphosphate. The protein operates within amino-acid biosynthesis; S-adenosyl-L-methionine biosynthesis; S-adenosyl-L-methionine from L-methionine: step 1/1. In terms of biological role, catalyzes the formation of S-adenosylmethionine (AdoMet) from methionine and ATP. The overall synthetic reaction is composed of two sequential steps, AdoMet formation and the subsequent tripolyphosphate hydrolysis which occurs prior to release of AdoMet from the enzyme. The protein is S-adenosylmethionine synthase of Clostridium acetobutylicum (strain ATCC 824 / DSM 792 / JCM 1419 / IAM 19013 / LMG 5710 / NBRC 13948 / NRRL B-527 / VKM B-1787 / 2291 / W).